Here is a 1125-residue protein sequence, read N- to C-terminus: tRNA (34-2'-O)-methyltransferase regulator WDR6 (1125 aa).

At methionine 1 the chain carries N-acetylmethionine. WD repeat units lie at residues 89–130 (SKGL…GNVA), 155–197 (TDRC…PDNK), 207–246 (GHVG…VPGG), 256–294 (GHSA…QAFR), 295–335 (GHQG…YPGL), 346–384 (SRPG…WEQL), 433–475 (LFQG…TGKA), 489–528 (SKQR…FKKP), 567–605 (HGKQ…QPVL), 611–650 (RGMN…KLHI), 652–692 (NCGG…IRPN), 725–765 (EHPD…GAAH), 767–798 (LTAV…HPGL), 860–905 (TRYM…RILH), 912–958 (HHKR…DRGS), 982–1024 (AHSC…PELE), and 1047–1085 (AHAA…PTFM).

The protein belongs to the WD repeat WDR6 family. As to quaternary structure, interacts with FTSJ1; the interaction is direct, and required for 2'-O-methylation of position 34 in substrate tRNAs. Interacts with IRS4. Interacts with STK11/LKB1. As to expression, expressed in hypothalamus, hippocampus, cerebrum cortex and cerebellum.

The protein localises to the cytoplasm. Its function is as follows. Together with methyltransferase FTSJ1, methylates the 2'-O-ribose of nucleotides at position 34 of the tRNA anticodon loop of substrate tRNAs. Required for the correct positioning of the substrate tRNA for methylation. Required to suppress amino acid starvation-induced autophagy. Enhances the STK11/LKB1-induced cell growth suppression activity. In Rattus norvegicus (Rat), this protein is tRNA (34-2'-O)-methyltransferase regulator WDR6 (Wdr6).